A 178-amino-acid polypeptide reads, in one-letter code: Prion-like protein doppel (178 aa).

Residues Met-1 to Lys-25 form the signal peptide. A flexible tail region spans residues Arg-27–His-50. The interval Thr-51–Gly-154 is globular. 2 disulfide bridges follow: Cys-94-Cys-147 and Cys-108-Cys-142. 2 N-linked (GlcNAc...) asparagine glycosylation sites follow: Asn-98 and Asn-110. A cu(2+) binding region spans residues Lys-124–Leu-141. Gly-154 carries GPI-anchor amidated glycine lipidation. The propeptide at Ala-155 to Lys-178 is removed in mature form.

Belongs to the prion family. Post-translationally, N-glycosylated. In terms of processing, O-glycosylated. As to expression, strongly expressed in testis. Detected at low levels in lymph node, spleen and ovary.

It localises to the cell membrane. Required for normal acrosome reaction and for normal male fertility. Can bind Cu(2+). This Ovis aries (Sheep) protein is Prion-like protein doppel (PRND).